A 296-amino-acid chain; its full sequence is Beta-lactamase (296 aa).

A signal peptide spans 1–21 (MKAYFIAILTLFTCIATVVRA). The Acyl-ester intermediate role is filled by Ser-66. Residue 235–237 (KTG) participates in substrate binding.

It belongs to the class-A beta-lactamase family.

It carries out the reaction a beta-lactam + H2O = a substituted beta-amino acid. In Bacteroides uniformis, this protein is Beta-lactamase (cblA).